Here is a 196-residue protein sequence, read N- to C-terminus: Pyridoxal 5'-phosphate synthase subunit PdxT (196 aa).

56–58 (GES) contributes to the L-glutamine binding site. C85 functions as the Nucleophile in the catalytic mechanism. L-glutamine contacts are provided by residues R113 and 141-142 (IR). Residues H177 and E179 each act as charge relay system in the active site.

The protein belongs to the glutaminase PdxT/SNO family. In the presence of PdxS, forms a dodecamer of heterodimers. Only shows activity in the heterodimer.

It catalyses the reaction aldehydo-D-ribose 5-phosphate + D-glyceraldehyde 3-phosphate + L-glutamine = pyridoxal 5'-phosphate + L-glutamate + phosphate + 3 H2O + H(+). It carries out the reaction L-glutamine + H2O = L-glutamate + NH4(+). The protein operates within cofactor biosynthesis; pyridoxal 5'-phosphate biosynthesis. In terms of biological role, catalyzes the hydrolysis of glutamine to glutamate and ammonia as part of the biosynthesis of pyridoxal 5'-phosphate. The resulting ammonia molecule is channeled to the active site of PdxS. The chain is Pyridoxal 5'-phosphate synthase subunit PdxT from Methanospirillum hungatei JF-1 (strain ATCC 27890 / DSM 864 / NBRC 100397 / JF-1).